The sequence spans 316 residues: Protein U25 (316 aa).

This sequence belongs to the herpesviridae US22 family.

The protein is Protein U25 (U25) of Homo sapiens (Human).